The following is a 215-amino-acid chain: Protein-methionine-sulfoxide reductase heme-binding subunit MsrQ (215 aa).

The next 6 membrane-spanning stretches (helical) occupy residues 17–37 (AAIWSLYVIGLCPGLWYFYLA), 50–70 (FEHLLGIWALRFLCLGLLVTP), 85–105 (ALGLIAFYYVLAHFTVYLVLD), 121–141 (PYIMLGMAGLIILIPLALTSN), 152–172 (WNTLHKLVYLVLIVGVLHFVL), and 177–197 (ITLEPVFYISTMVVLLGYRLV).

This sequence belongs to the MsrQ family. In terms of assembly, heterodimer of a catalytic subunit (MsrP) and a heme-binding subunit (MsrQ). FMN serves as cofactor. It depends on heme b as a cofactor.

Its subcellular location is the cell inner membrane. Functionally, part of the MsrPQ system that repairs oxidized periplasmic proteins containing methionine sulfoxide residues (Met-O), using respiratory chain electrons. Thus protects these proteins from oxidative-stress damage caused by reactive species of oxygen and chlorine generated by the host defense mechanisms. MsrPQ is essential for the maintenance of envelope integrity under bleach stress, rescuing a wide series of structurally unrelated periplasmic proteins from methionine oxidation. MsrQ provides electrons for reduction to the reductase catalytic subunit MsrP, using the quinone pool of the respiratory chain. The polypeptide is Protein-methionine-sulfoxide reductase heme-binding subunit MsrQ (Agrobacterium fabrum (strain C58 / ATCC 33970) (Agrobacterium tumefaciens (strain C58))).